Consider the following 184-residue polypeptide: Large ribosomal subunit protein uL6 (184 aa).

Belongs to the universal ribosomal protein uL6 family. As to quaternary structure, part of the 50S ribosomal subunit.

In terms of biological role, this protein binds to the 23S rRNA, and is important in its secondary structure. It is located near the subunit interface in the base of the L7/L12 stalk, and near the tRNA binding site of the peptidyltransferase center. This Cytophaga hutchinsonii (strain ATCC 33406 / DSM 1761 / CIP 103989 / NBRC 15051 / NCIMB 9469 / D465) protein is Large ribosomal subunit protein uL6.